Here is a 344-residue protein sequence, read N- to C-terminus: Probable electron transfer flavoprotein subunit alpha, mitochondrial (344 aa).

Residue 284 to 312 (LYIAIGVSGAVQHLAGMKDSKVIVAINND) participates in FAD binding.

The protein belongs to the ETF alpha-subunit/FixB family. As to quaternary structure, heterodimer of an alpha and a beta subunit. Requires FAD as cofactor.

The protein resides in the mitochondrion matrix. The electron transfer flavoprotein serves as a specific electron acceptor for several dehydrogenases, including five acyl-CoA dehydrogenases, glutaryl-CoA and sarcosine dehydrogenase. It transfers the electrons to the main mitochondrial respiratory chain via ETF-ubiquinone oxidoreductase (ETF dehydrogenase). This is Probable electron transfer flavoprotein subunit alpha, mitochondrial (AIM45) from Saccharomyces cerevisiae (strain ATCC 204508 / S288c) (Baker's yeast).